A 295-amino-acid chain; its full sequence is Methionine aminopeptidase (295 aa).

His-63 contributes to the substrate binding site. 3 residues coordinate a divalent metal cation: Asp-83, Asp-94, and His-154. His-162 contributes to the substrate binding site. Residues Glu-188 and Glu-281 each coordinate a divalent metal cation.

This sequence belongs to the peptidase M24A family. Methionine aminopeptidase archaeal type 2 subfamily. As to quaternary structure, monomer. Requires Fe(2+) as cofactor. Co(2+) is required as a cofactor. Ni(2+) serves as cofactor. The cofactor is Mn(2+).

It catalyses the reaction Release of N-terminal amino acids, preferentially methionine, from peptides and arylamides.. Removes the N-terminal methionine from nascent proteins. The N-terminal methionine is often cleaved when the second residue in the primary sequence is small and uncharged (Met-Ala-, Cys, Gly, Pro, Ser, Thr, or Val). In Thermococcus onnurineus (strain NA1), this protein is Methionine aminopeptidase.